The primary structure comprises 1357 residues: Vascular endothelial growth factor receptor 2 (1357 aa).

A signal peptide spans methionine 1–alanine 22. Topologically, residues isoleucine 23–leucine 774 are extracellular. Ig-like C2-type domains lie at proline 32–valine 120, valine 120–valine 222, proline 216–isoleucine 330, proline 335–glutamine 426, proline 433–phenylalanine 553, threonine 556–asparagine 667, and serine 676–serine 762. Asparagine 35, asparagine 44, asparagine 66, asparagine 97, asparagine 161, asparagine 209, asparagine 247, asparagine 272, asparagine 303, asparagine 307, asparagine 407, asparagine 501, asparagine 560, asparagine 621, asparagine 631, asparagine 640, asparagine 681, asparagine 688, and asparagine 713 each carry an N-linked (GlcNAc...) asparagine glycan. 2 disulfide bridges follow: cysteine 53/cysteine 104 and cysteine 153/cysteine 203. Cysteine 248 and cysteine 314 are disulfide-bonded. Cysteine 457 and cysteine 538 are disulfide-bonded. A disulfide bridge connects residues cysteine 579 and cysteine 651. Cysteine 697 and cysteine 746 are joined by a disulfide. A helical membrane pass occupies residues isoleucine 775–isoleucine 795. Over arginine 796–valine 1357 the chain is Cytoplasmic. Positions leucine 843–asparagine 1173 constitute a Protein kinase domain. ATP contacts are provided by residues leucine 849–valine 857 and lysine 877. Residues tyrosine 944–threonine 975 form a disordered region. Aspartate 1039 functions as the Proton acceptor in the catalytic mechanism. Phosphotyrosine; by autocatalysis occurs at positions 1065, 1070, 1186, and 1222. A disordered region spans residues serine 1296–valine 1357. Residues alanine 1298–tyrosine 1312 are compositionally biased toward polar residues.

Belongs to the protein kinase superfamily. Tyr protein kinase family. CSF-1/PDGF receptor subfamily. Interacts with isoform VEGF165 of vegfaa and, to a lesser extent, with isoform VEGF171 of vegfab. Interacts (via juxtamembrane region) with chaperone pdcl3 (via thioredoxin fold region); the interaction leads to increased vegfr2 abundance through inhibition of its ubiquitination and degradation. In terms of tissue distribution, first expressed in embryos between 5- and 7-somites in the bilateral stripes that contain the developing angioblasts, and then localized to the intermediate cell mass (ICM) and the developing vasculature. By 30 hpf, expressed in the major trunk, head and intersomitic vessels, persisting through 4 dpf when expression is seen in developing subintestinal veins and in the remaining vasculature.

It localises to the cell membrane. The protein resides in the cytoplasm. The protein localises to the nucleus. Its subcellular location is the cytoplasmic vesicle. It is found in the early endosome. It localises to the cell junction. The protein resides in the endoplasmic reticulum. The catalysed reaction is L-tyrosyl-[protein] + ATP = O-phospho-L-tyrosyl-[protein] + ADP + H(+). Its function is as follows. Receptor for VEGF or VEGFC. Has a tyrosine-protein kinase activity. Combinations of multiple VEGF receptors are required for development of different blood vessel types in the embryo. Involved in angiogenesis, specifically in VEGF-induced sprouting of new blood vessels. Particularly involved in artery formation. Does not appear to be required for hematopoiesis. The protein is Vascular endothelial growth factor receptor 2 of Danio rerio (Zebrafish).